A 353-amino-acid polypeptide reads, in one-letter code: Photosystem II D2 protein (353 aa).

Threonine 2 is modified (N-acetylthreonine). The residue at position 2 (threonine 2) is a Phosphothreonine. Residues 41–61 (CAYFALGGWFTGTTFVTSWYT) form a helical membrane-spanning segment. Chlorophyll a is bound at residue histidine 118. The chain crosses the membrane as a helical span at residues 125-141 (GFMLRQFELARSVQLRP). Glutamine 130 and asparagine 143 together coordinate pheophytin a. A helical membrane pass occupies residues 153–166 (VFVSVFLIYPLGQS). Histidine 198 contacts chlorophyll a. Residues 208–228 (AALLCAIHGATVENTLFEDGD) form a helical membrane-spanning segment. Positions 215 and 262 each coordinate a plastoquinone. Residue histidine 215 participates in Fe cation binding. Fe cation is bound at residue histidine 269. Residues 279-295 (GLWMSALGVVGLALNLR) traverse the membrane as a helical segment.

The protein belongs to the reaction center PufL/M/PsbA/D family. As to quaternary structure, PSII is composed of 1 copy each of membrane proteins PsbA, PsbB, PsbC, PsbD, PsbE, PsbF, PsbH, PsbI, PsbJ, PsbK, PsbL, PsbM, PsbT, PsbX, PsbY, PsbZ, Psb30/Ycf12, at least 3 peripheral proteins of the oxygen-evolving complex and a large number of cofactors. It forms dimeric complexes. It depends on The D1/D2 heterodimer binds P680, chlorophylls that are the primary electron donor of PSII, and subsequent electron acceptors. It shares a non-heme iron and each subunit binds pheophytin, quinone, additional chlorophylls, carotenoids and lipids. There is also a Cl(-1) ion associated with D1 and D2, which is required for oxygen evolution. The PSII complex binds additional chlorophylls, carotenoids and specific lipids. as a cofactor.

It is found in the plastid. It localises to the chloroplast thylakoid membrane. It catalyses the reaction 2 a plastoquinone + 4 hnu + 2 H2O = 2 a plastoquinol + O2. Functionally, photosystem II (PSII) is a light-driven water:plastoquinone oxidoreductase that uses light energy to abstract electrons from H(2)O, generating O(2) and a proton gradient subsequently used for ATP formation. It consists of a core antenna complex that captures photons, and an electron transfer chain that converts photonic excitation into a charge separation. The D1/D2 (PsbA/PsbD) reaction center heterodimer binds P680, the primary electron donor of PSII as well as several subsequent electron acceptors. D2 is needed for assembly of a stable PSII complex. The polypeptide is Photosystem II D2 protein (Platanus occidentalis (Sycamore)).